A 301-amino-acid polypeptide reads, in one-letter code: Protein FdhE homolog (301 aa).

The protein belongs to the FdhE family.

The protein localises to the cytoplasm. Necessary for formate dehydrogenase activity. This chain is Protein FdhE homolog, found in Erwinia tasmaniensis (strain DSM 17950 / CFBP 7177 / CIP 109463 / NCPPB 4357 / Et1/99).